We begin with the raw amino-acid sequence, 145 residues long: Ventricular natriuretic peptide (145 aa).

A signal peptide spans Met-1–Ala-24. Cys-117 and Cys-133 are oxidised to a cystine.

This sequence belongs to the natriuretic peptide family. Heart atrium and ventricle, and to a very low extent in brain.

Its subcellular location is the secreted. Exhibits natriuretic and vasodepressor activity. This Acipenser transmontanus (White sturgeon) protein is Ventricular natriuretic peptide (vnp).